The chain runs to 55 residues: U-reduvitoxin-Pr2a (55 aa).

An N-terminal signal peptide occupies residues M1–S21. Cystine bridges form between C26–C41, C33–C46, and C40–C51.

The protein belongs to the venom Ptu1-like knottin family. In terms of tissue distribution, expressed by the venom gland (posterior main gland) (at protein level).

It localises to the secreted. In terms of biological role, binds reversibly and blocks P/Q-type voltage-gated calcium channels (Cav). This is U-reduvitoxin-Pr2a from Platymeris rhadamanthus (Red spot assassin bug).